The chain runs to 283 residues: Thymidylate synthase (283 aa).

Arg-22 contacts dUMP. Catalysis depends on Cys-160, which acts as the Nucleophile. DUMP contacts are provided by residues 180 to 183, Asn-191, and 221 to 223; these read RSCD and HIY. Asp-183 provides a ligand contact to (6R)-5,10-methylene-5,6,7,8-tetrahydrofolate. (6R)-5,10-methylene-5,6,7,8-tetrahydrofolate is bound at residue Ser-282.

Belongs to the thymidylate synthase family. Bacterial-type ThyA subfamily. In terms of assembly, homodimer.

Its subcellular location is the cytoplasm. It catalyses the reaction dUMP + (6R)-5,10-methylene-5,6,7,8-tetrahydrofolate = 7,8-dihydrofolate + dTMP. It functions in the pathway pyrimidine metabolism; dTTP biosynthesis. Catalyzes the reductive methylation of 2'-deoxyuridine-5'-monophosphate (dUMP) to 2'-deoxythymidine-5'-monophosphate (dTMP) while utilizing 5,10-methylenetetrahydrofolate (mTHF) as the methyl donor and reductant in the reaction, yielding dihydrofolate (DHF) as a by-product. This enzymatic reaction provides an intracellular de novo source of dTMP, an essential precursor for DNA biosynthesis. The polypeptide is Thymidylate synthase (Vibrio vulnificus (strain CMCP6)).